The following is an 85-amino-acid chain: MPRPALRSRSLRRIYVKLPSGKTAIHYERKKNDIPKCAMCKKPLHGVKTNFLHKYGKSEKRPERPFGGYLCSSCLAQLIKAMVRQ.

This sequence belongs to the eukaryotic ribosomal protein eL34 family.

The chain is Large ribosomal subunit protein eL34 from Saccharolobus islandicus (strain M.16.27) (Sulfolobus islandicus).